The chain runs to 180 residues: MKLDNETIVHRYGKALFELAEEMKIRNKFHSELQEYKKVLQNEPQLKVFMSSNQISPEAKLKIMEILKKDSSKLMTNLLDMLYDYGRITSLEGIIDEFDRLNDEFEKTVRASVITAIELDEERKQKLASSFANVVGAKKVIIDPIVDPGIIGGVILKSESYIYDGSIKTKIARIKRLLLK.

This sequence belongs to the ATPase delta chain family. As to quaternary structure, F-type ATPases have 2 components, F(1) - the catalytic core - and F(0) - the membrane proton channel. F(1) has five subunits: alpha(3), beta(3), gamma(1), delta(1), epsilon(1). F(0) has three main subunits: a(1), b(2) and c(10-14). The alpha and beta chains form an alternating ring which encloses part of the gamma chain. F(1) is attached to F(0) by a central stalk formed by the gamma and epsilon chains, while a peripheral stalk is formed by the delta and b chains.

The protein resides in the cell membrane. In terms of biological role, f(1)F(0) ATP synthase produces ATP from ADP in the presence of a proton or sodium gradient. F-type ATPases consist of two structural domains, F(1) containing the extramembraneous catalytic core and F(0) containing the membrane proton channel, linked together by a central stalk and a peripheral stalk. During catalysis, ATP synthesis in the catalytic domain of F(1) is coupled via a rotary mechanism of the central stalk subunits to proton translocation. This protein is part of the stalk that links CF(0) to CF(1). It either transmits conformational changes from CF(0) to CF(1) or is implicated in proton conduction. This chain is ATP synthase subunit delta, found in Ligilactobacillus salivarius (strain UCC118) (Lactobacillus salivarius).